Here is a 320-residue protein sequence, read N- to C-terminus: uncharacterized protein (320 aa).

The interval 1 to 40 (MDHPSTSSLPRKKVKAGVKKAGKKTGKKTTGKKKTTPSAI) is disordered. Residues 10–35 (PRKKVKAGVKKAGKKTGKKTTGKKKT) show a composition bias toward basic residues. A helical membrane pass occupies residues 51 to 71 (LLVLLAVLSYLAALSLGLYIM). Asn92, Asn122, Asn154, and Asn167 each carry an N-linked (GlcNAc...) asparagine glycan. The next 2 helical transmembrane spans lie at 186-206 (PLVH…AMTG) and 216-236 (MLVT…VTVL). An N-linked (GlcNAc...) asparagine glycan is attached at Asn247. Residues 272–292 (VQGALVAIVAVFYLTMGVVFV) form a helical membrane-spanning segment.

Its subcellular location is the membrane. It functions in the pathway secondary metabolite biosynthesis; terpenoid biosynthesis. Functionally, part of the gene cluster that mediates the biosynthesis of an ophiobolin family sesterterpenoid. This is an uncharacterized protein from Aspergillus terreus.